The chain runs to 1196 residues: DNA-directed RNA polymerase subunit beta (1196 aa).

The protein belongs to the RNA polymerase beta chain family. In terms of assembly, the RNAP catalytic core consists of 2 alpha, 1 beta, 1 beta' and 1 omega subunit. When a sigma factor is associated with the core the holoenzyme is formed, which can initiate transcription.

It catalyses the reaction RNA(n) + a ribonucleoside 5'-triphosphate = RNA(n+1) + diphosphate. In terms of biological role, DNA-dependent RNA polymerase catalyzes the transcription of DNA into RNA using the four ribonucleoside triphosphates as substrates. This chain is DNA-directed RNA polymerase subunit beta, found in Lactococcus lactis subsp. lactis (strain IL1403) (Streptococcus lactis).